Here is a 347-residue protein sequence, read N- to C-terminus: uncharacterized protein (347 aa).

It localises to the cytoplasm. The protein localises to the nucleus. This is an uncharacterized protein from Schizosaccharomyces pombe (strain 972 / ATCC 24843) (Fission yeast).